Consider the following 84-residue polypeptide: MAHKKGGGSTKNGRDSNPKYLGVKAAGGSTVAAGTIILRQRGTVIKPGMNAGLGRDHTIFALIDGVVTFRNGRNNKKQVNILPC.

The interval 1–21 (MAHKKGGGSTKNGRDSNPKYL) is disordered.

The protein belongs to the bacterial ribosomal protein bL27 family.

The chain is Large ribosomal subunit protein bL27 from Pelodictyon phaeoclathratiforme (strain DSM 5477 / BU-1).